A 243-amino-acid polypeptide reads, in one-letter code: tRNA pseudouridine synthase A (243 aa).

The active-site Nucleophile is D53. Y111 is a binding site for substrate.

This sequence belongs to the tRNA pseudouridine synthase TruA family. In terms of assembly, homodimer.

It catalyses the reaction uridine(38/39/40) in tRNA = pseudouridine(38/39/40) in tRNA. Its function is as follows. Formation of pseudouridine at positions 38, 39 and 40 in the anticodon stem and loop of transfer RNAs. This Chlorobium limicola (strain DSM 245 / NBRC 103803 / 6330) protein is tRNA pseudouridine synthase A.